Consider the following 123-residue polypeptide: Small ribosomal subunit protein uS12c (123 aa).

Belongs to the universal ribosomal protein uS12 family. As to quaternary structure, part of the 30S ribosomal subunit.

It localises to the plastid. It is found in the chloroplast. Functionally, with S4 and S5 plays an important role in translational accuracy. Located at the interface of the 30S and 50S subunits. The polypeptide is Small ribosomal subunit protein uS12c (rps12) (Marchantia polymorpha (Common liverwort)).